The following is a 42-amino-acid chain: uncharacterized protein (42 aa).

A helical membrane pass occupies residues 18–38 (VGAISLTVMMILFFIAIVWFL).

It localises to the host membrane. This is an uncharacterized protein from His1 virus (isolate Australia/Victoria) (His1V).